Here is a 436-residue protein sequence, read N- to C-terminus: Glutamyl-tRNA reductase (436 aa).

Residues threonine 49–arginine 52, serine 109, glutamate 114–glutamine 116, and glutamine 120 contribute to the substrate site. The Nucleophile role is filled by cysteine 50. Glycine 198 to serine 203 is an NADP(+) binding site.

It belongs to the glutamyl-tRNA reductase family. Homodimer.

It catalyses the reaction (S)-4-amino-5-oxopentanoate + tRNA(Glu) + NADP(+) = L-glutamyl-tRNA(Glu) + NADPH + H(+). It functions in the pathway porphyrin-containing compound metabolism; protoporphyrin-IX biosynthesis; 5-aminolevulinate from L-glutamyl-tRNA(Glu): step 1/2. Its pathway is porphyrin-containing compound metabolism; chlorophyll biosynthesis. Catalyzes the NADPH-dependent reduction of glutamyl-tRNA(Glu) to glutamate 1-semialdehyde (GSA). The chain is Glutamyl-tRNA reductase from Prochlorococcus marinus (strain MIT 9301).